The chain runs to 301 residues: MTLSRDDAAQVAKVLSEALPYIRRFVGKTLVIKYGGNAMESEELKAGFARDVVLMKAVGINPVVVHGGGPQIGDLLKRLSIESHFIDGMRVTDAATMDVVEMVLGGQVNKDIVNLINRHGGSAIGLTGKDAELIRAKKLTVTRQTPEMTKPEIIDIGHVGEVTGVNVELLNMLVKGDFIPVIAPIGVGSNGESYNINADLVAGKVAEALKAEKLMLLTNIAGLMDKQGQVLTGLSTEQVNELIADGTIYGGMLPKIRCALEAVQGGVTSAHIIDGRVPNAVLLEIFTDSGVGTLISNRKRH.

Residues 68–69 (GG), arginine 90, and asparagine 195 each bind substrate.

This sequence belongs to the acetylglutamate kinase family. ArgB subfamily.

The protein localises to the cytoplasm. The catalysed reaction is N-acetyl-L-glutamate + ATP = N-acetyl-L-glutamyl 5-phosphate + ADP. The protein operates within amino-acid biosynthesis; L-arginine biosynthesis; N(2)-acetyl-L-ornithine from L-glutamate: step 2/4. Catalyzes the ATP-dependent phosphorylation of N-acetyl-L-glutamate. The protein is Acetylglutamate kinase of Pseudomonas paraeruginosa (strain DSM 24068 / PA7) (Pseudomonas aeruginosa (strain PA7)).